The chain runs to 222 residues: uncharacterized protein (222 aa).

Helical transmembrane passes span 23-43 (FFAA…TGLL), 67-87 (IWVL…IGYL), 157-177 (IVGG…LGNV), and 187-207 (IILG…WHGY).

It belongs to the DedA family.

Its subcellular location is the cell membrane. This is an uncharacterized protein from Mycobacterium leprae (strain TN).